The chain runs to 1393 residues: DNA-directed RNA polymerase subunit beta' (1393 aa).

4 residues coordinate Zn(2+): Cys-70, Cys-72, Cys-85, and Cys-88. Residues Asp-461, Asp-463, and Asp-465 each contribute to the Mg(2+) site. Zn(2+) contacts are provided by Cys-804, Cys-877, Cys-884, and Cys-887.

The protein belongs to the RNA polymerase beta' chain family. In terms of assembly, the RNAP catalytic core consists of 2 alpha, 1 beta, 1 beta' and 1 omega subunit. When a sigma factor is associated with the core the holoenzyme is formed, which can initiate transcription. Requires Mg(2+) as cofactor. The cofactor is Zn(2+).

It carries out the reaction RNA(n) + a ribonucleoside 5'-triphosphate = RNA(n+1) + diphosphate. DNA-dependent RNA polymerase catalyzes the transcription of DNA into RNA using the four ribonucleoside triphosphates as substrates. This chain is DNA-directed RNA polymerase subunit beta', found in Rhodospirillum rubrum (strain ATCC 11170 / ATH 1.1.1 / DSM 467 / LMG 4362 / NCIMB 8255 / S1).